Here is a 67-residue protein sequence, read N- to C-terminus: Amphipathic peptide Tx348 (67 aa).

The first 23 residues, 1–23 (MKSQAFFLLFLVVLLLATTQSEA), serve as a signal peptide directing secretion. Residue Phe33 is modified to Phenylalanine amide. Residues 37–67 (SMRNMDTMKYLYDPSLSAADLKTLQKLMENY) constitute a propeptide that is removed on maturation.

It belongs to the non-disulfide-bridged peptide (NDBP) superfamily. Short antimicrobial peptide (group 4) family. In terms of tissue distribution, expressed by the venom gland.

Its subcellular location is the secreted. It localises to the target cell membrane. In terms of biological role, amphipathic peptide that has antibacterial activities. The protein is Amphipathic peptide Tx348 of Buthus israelis (Israeli scorpion).